The primary structure comprises 130 residues: uncharacterized protein (130 aa).

The disordered stretch occupies residues 1–34 (MTAVGGSPPTRRCPATEDRAPATVATPSSTDPTA).

To M.tuberculosis Rv1583c.

This is an uncharacterized protein from Mycobacterium tuberculosis (strain CDC 1551 / Oshkosh).